A 515-amino-acid chain; its full sequence is Galactose/methyl galactoside import ATP-binding protein MglA (515 aa).

ABC transporter domains lie at 8–243 (LEMR…VGRE) and 254–499 (IPKE…AKYL). 40 to 47 (GENGAGKS) is a binding site for ATP.

Belongs to the ABC transporter superfamily. Galactose/methyl galactoside importer (TC 3.A.1.2.3) family. As to quaternary structure, the complex is composed of one ATP-binding protein (MglA), two transmembrane proteins (MglC) and a solute-binding protein (MglB).

It is found in the cell membrane. The catalysed reaction is D-galactose(out) + ATP + H2O = D-galactose(in) + ADP + phosphate + H(+). It carries out the reaction methyl beta-D-galactoside(out) + ATP + H2O = methyl beta-D-galactoside(in) + ADP + phosphate + H(+). Functionally, part of the ABC transporter complex MglABC involved in galactose/methyl galactoside import. Responsible for energy coupling to the transport system. The sequence is that of Galactose/methyl galactoside import ATP-binding protein MglA from Clostridium perfringens (strain ATCC 13124 / DSM 756 / JCM 1290 / NCIMB 6125 / NCTC 8237 / Type A).